Reading from the N-terminus, the 149-residue chain is MASSASSVFAAFDKDGDGKVSASELRGCMAAALGEEVSEEEAAAILATADTDGDGLLDHHEFMRLSAAHQLQEPAEESLRCLREAFDMYAEEEETAVITPASLRRMLRRLGSEHQRLEMEECRAMICRFDLNGDGVLSFDEFRVMMLMA.

EF-hand domains lie at 1-35, 37-72, 77-113, and 117-149; these read MASS…ALGE, VSEE…HQLQ, ESLR…LGSE, and LEME…MLMA. The Ca(2+) site is built by aspartate 13, aspartate 15, aspartate 17, lysine 19, glutamate 24, aspartate 50, aspartate 52, aspartate 54, and glutamate 61. 4 residues coordinate Ca(2+): aspartate 130, asparagine 132, aspartate 134, and glutamate 141.

In terms of biological role, potential calcium sensor. The protein is Probable calcium-binding protein CML25/26 (CML25) of Oryza sativa subsp. japonica (Rice).